We begin with the raw amino-acid sequence, 413 residues long: Serine/threonine transporter SstT (413 aa).

Transmembrane regions (helical) follow at residues 14–34 (GSLV…ASFS), 44–64 (LGTL…FILV), 82–102 (IVLL…VVSF), 141–161 (ALAS…GVAL), 178–198 (GVTF…FGLV), 217–237 (LMVL…LIVF), 290–310 (IPLG…VLTL), 330–350 (LVAA…LLLI), and 356–376 (LFGI…IIGV).

Belongs to the dicarboxylate/amino acid:cation symporter (DAACS) (TC 2.A.23) family.

The protein localises to the cell inner membrane. The catalysed reaction is L-serine(in) + Na(+)(in) = L-serine(out) + Na(+)(out). It carries out the reaction L-threonine(in) + Na(+)(in) = L-threonine(out) + Na(+)(out). Functionally, involved in the import of serine and threonine into the cell, with the concomitant import of sodium (symport system). The sequence is that of Serine/threonine transporter SstT from Edwardsiella ictaluri (strain 93-146).